A 61-amino-acid polypeptide reads, in one-letter code: Putative antitoxin RelB2 (61 aa).

Antitoxin component of a type II toxin-antitoxin (TA) system. Its cognate toxin is RelE2 (Potential). The polypeptide is Putative antitoxin RelB2 (relB2) (Methanocaldococcus jannaschii (strain ATCC 43067 / DSM 2661 / JAL-1 / JCM 10045 / NBRC 100440) (Methanococcus jannaschii)).